A 156-amino-acid chain; its full sequence is MNITVLAVGTKMPRWVDEAVAEYAKRFGRDVAYALKEIKPEKRGAGVNAAQGMAAEEKRILEAIPQGAFLVVLDERGKAPTSVELAEHLKSWRQNGEHVCFVIGGADGMTDRLKQQARMMMRLSSLTLPHGMVRVFLTEQLYRAVSILHNHPYHRE.

Residues Leu73, Gly104, and Leu123–Leu128 each bind S-adenosyl-L-methionine.

This sequence belongs to the RNA methyltransferase RlmH family. Homodimer.

It localises to the cytoplasm. The enzyme catalyses pseudouridine(1915) in 23S rRNA + S-adenosyl-L-methionine = N(3)-methylpseudouridine(1915) in 23S rRNA + S-adenosyl-L-homocysteine + H(+). In terms of biological role, specifically methylates the pseudouridine at position 1915 (m3Psi1915) in 23S rRNA. The sequence is that of Ribosomal RNA large subunit methyltransferase H from Neisseria meningitidis serogroup A / serotype 4A (strain DSM 15465 / Z2491).